Consider the following 148-residue polypeptide: 3-dehydroquinate dehydratase (148 aa).

Catalysis depends on Tyr-26, which acts as the Proton acceptor. The substrate site is built by Asn-77, His-83, and Asp-90. His-103 acts as the Proton donor in catalysis. Residues 104–105 and Arg-114 contribute to the substrate site; that span reads LS.

This sequence belongs to the type-II 3-dehydroquinase family. As to quaternary structure, homododecamer.

The catalysed reaction is 3-dehydroquinate = 3-dehydroshikimate + H2O. Its pathway is metabolic intermediate biosynthesis; chorismate biosynthesis; chorismate from D-erythrose 4-phosphate and phosphoenolpyruvate: step 3/7. Functionally, catalyzes a trans-dehydration via an enolate intermediate. The polypeptide is 3-dehydroquinate dehydratase (Chlorobaculum tepidum (strain ATCC 49652 / DSM 12025 / NBRC 103806 / TLS) (Chlorobium tepidum)).